A 502-amino-acid chain; its full sequence is ATP synthase subunit alpha (502 aa).

169 to 176 (GDRQTGKT) provides a ligand contact to ATP.

The protein belongs to the ATPase alpha/beta chains family. F-type ATPases have 2 components, CF(1) - the catalytic core - and CF(0) - the membrane proton channel. CF(1) has five subunits: alpha(3), beta(3), gamma(1), delta(1), epsilon(1). CF(0) has three main subunits: a(1), b(2) and c(9-12). The alpha and beta chains form an alternating ring which encloses part of the gamma chain. CF(1) is attached to CF(0) by a central stalk formed by the gamma and epsilon chains, while a peripheral stalk is formed by the delta and b chains.

Its subcellular location is the cell membrane. The catalysed reaction is ATP + H2O + 4 H(+)(in) = ADP + phosphate + 5 H(+)(out). Its function is as follows. Produces ATP from ADP in the presence of a proton gradient across the membrane. The alpha chain is a regulatory subunit. The chain is ATP synthase subunit alpha from Staphylococcus aureus (strain COL).